The primary structure comprises 393 residues: Phosphoglycerate kinase (393 aa).

Residues 21-23 (DLN), Arg-36, 59-62 (HLGR), Arg-113, and Arg-146 each bind substrate. Residues Lys-197, Glu-319, and 345–348 (GGDT) contribute to the ATP site.

Belongs to the phosphoglycerate kinase family. As to quaternary structure, monomer.

The protein localises to the cytoplasm. The catalysed reaction is (2R)-3-phosphoglycerate + ATP = (2R)-3-phospho-glyceroyl phosphate + ADP. It participates in carbohydrate degradation; glycolysis; pyruvate from D-glyceraldehyde 3-phosphate: step 2/5. The chain is Phosphoglycerate kinase from Nitratidesulfovibrio vulgaris (strain ATCC 29579 / DSM 644 / CCUG 34227 / NCIMB 8303 / VKM B-1760 / Hildenborough) (Desulfovibrio vulgaris).